Consider the following 236-residue polypeptide: UPF0502 protein BceJ2315_62050 (236 aa).

It belongs to the UPF0502 family.

This is UPF0502 protein BceJ2315_62050 from Burkholderia cenocepacia (strain ATCC BAA-245 / DSM 16553 / LMG 16656 / NCTC 13227 / J2315 / CF5610) (Burkholderia cepacia (strain J2315)).